A 230-amino-acid polypeptide reads, in one-letter code: Esterase OVCA2 (230 aa).

Catalysis depends on charge relay system residues Ser124, Asp182, and His209.

Belongs to the LovG family.

It carries out the reaction a carboxylic ester + H2O = an alcohol + a carboxylate + H(+). In terms of biological role, exhibits ester hydrolase activity with a strong preference for long-chain alkyl ester substrates and high selectivity against a variety of short, branched, and substituted esters. Is able to hydrolyze ester bonds within a wide range of p-nitrophenyl derivatives (C2-C14) in vitro, with a strong preference toward substrates of &gt;8 carbons. This Xenopus tropicalis (Western clawed frog) protein is Esterase OVCA2 (ovca2).